A 528-amino-acid chain; its full sequence is Phosphoenolpyruvate carboxykinase (ATP) (528 aa).

Substrate-binding residues include arginine 56, tyrosine 192, and lysine 198. ATP-binding positions include lysine 198, histidine 217, and 233-241 (GLSGTGKTT). Lysine 198 and histidine 217 together coordinate Mn(2+). Aspartate 254 provides a ligand contact to Mn(2+). The ATP site is built by glutamate 282, arginine 319, and threonine 444. Residue arginine 319 coordinates substrate.

Belongs to the phosphoenolpyruvate carboxykinase (ATP) family. Mn(2+) serves as cofactor.

The protein resides in the cytoplasm. The catalysed reaction is oxaloacetate + ATP = phosphoenolpyruvate + ADP + CO2. It functions in the pathway carbohydrate biosynthesis; gluconeogenesis. Its function is as follows. Involved in the gluconeogenesis. Catalyzes the conversion of oxaloacetate (OAA) to phosphoenolpyruvate (PEP) through direct phosphoryl transfer between the nucleoside triphosphate and OAA. This Bacillus cereus (strain ATCC 10987 / NRS 248) protein is Phosphoenolpyruvate carboxykinase (ATP).